An 88-amino-acid chain; its full sequence is Probable Fe(2+)-trafficking protein (88 aa).

This sequence belongs to the Fe(2+)-trafficking protein family.

Functionally, could be a mediator in iron transactions between iron acquisition and iron-requiring processes, such as synthesis and/or repair of Fe-S clusters in biosynthetic enzymes. This chain is Probable Fe(2+)-trafficking protein, found in Teredinibacter turnerae (strain ATCC 39867 / T7901).